The following is a 365-amino-acid chain: Alanine racemase (365 aa).

K35 (proton acceptor; specific for D-alanine) is an active-site residue. N6-(pyridoxal phosphate)lysine is present on K35. R130 provides a ligand contact to substrate. Catalysis depends on Y256, which acts as the Proton acceptor; specific for L-alanine. M304 contacts substrate.

Belongs to the alanine racemase family. Requires pyridoxal 5'-phosphate as cofactor.

It catalyses the reaction L-alanine = D-alanine. It functions in the pathway amino-acid biosynthesis; D-alanine biosynthesis; D-alanine from L-alanine: step 1/1. In terms of biological role, catalyzes the interconversion of L-alanine and D-alanine. May also act on other amino acids. This is Alanine racemase (alr) from Acidovorax sp. (strain JS42).